Here is a 1375-residue protein sequence, read N- to C-terminus: BNI1-related protein 1 (1375 aa).

Residues 94 to 490 (CMPQDASLVE…YLIDSFQVST (397 aa)) form the GBD/FH3 domain. Residues 520–601 (QSDEIARRAV…ITTHQRLYDQ (82 aa)) adopt a coiled-coil conformation. The residue at position 621 (Ser-621) is a Phosphoserine. Residues 659 to 851 (SSYLTDANNE…LVTPPAPPLP (193 aa)) form the FH1 domain. Residues 661-684 (YLTDANNENESQNESEDKSKDSLF) are disordered. Phosphoserine is present on Ser-751. 3 disordered regions span residues 764–785 (KLPQLPPPPPPPPPPPLPQSLL), 817–839 (AVPPPPPPPPLPESLSMNKGPSN), and 1285–1309 (KSLLDMRTSSNKKSNGSDENDGEKV). Pro residues-rich tracts occupy residues 767–781 (QLPPPPPPPPPPPLP) and 818–828 (VPPPPPPPPLP). Residues 868–1290 (DLKPPPTEKR…YEQRKSLLDM (423 aa)) form the FH2 domain. The DAD domain maps to 1302–1336 (DENDGEKVNRDAVDLLISKLREVKKDPEPLRRRKS).

It belongs to the formin homology family. BNI1 subfamily. As to quaternary structure, interacts with profilin at the FH1 domain.

Its function is as follows. May organize microtubules by mediating spindle positioning and movement in the budding process. Potential target of the RHO family members. This is BNI1-related protein 1 (BNR1) from Saccharomyces cerevisiae (strain ATCC 204508 / S288c) (Baker's yeast).